Consider the following 490-residue polypeptide: MGGLHQGHARLIATAVTSCGGKGSVLVSTFVNPLQFGVDEDFDCYPRTFEDDCALAEQAGASALWCPDERQVYPYGTSEGWRLQAPARLTAHLCGPWRSGHFDGVVTVVMRLLGLVRPHQLWLGEKDWQQLTILRHLVNDFGLRVRVRGCPTVREGDGLAASSRNRYLGDAQRTVASAFSSALCATARDVCAGSVDEASAQVALRQQLREAGLEVEYVETVDPVTLQPARPGRSIRLLAAAVRCGETRLIDHVFIMTRSPIVAIDGPAGAGKSTVTRAFAERMGLLYLDTGAMYRAVTWWVQSNGADPSSAPAVEALLEGLEVDLSPLKDGVQTVRVNGRDITDAIRDPEVTGSVSLVAAHPCVRALLTKQQQRLGERGGLVAEGRDIGTAVFPDADVKVFLTATPEERARRRAKDLEARGHAVPDLAALEAQIVERDRLDSTREVAPLVQADDATELITDGMSIEAVIDALEDLFRFRVAKEIWPTPQG.

An ATP-binding site is contributed by 1–8; the sequence is MGGLHQGH. The interval 1–253 is pantoate--beta-alanine ligase; the sequence is MGGLHQGHAR…CGETRLIDHV (253 aa). His8 functions as the Proton donor in the catalytic mechanism. Position 35 (Gln35) interacts with (R)-pantoate. Residue Gln35 coordinates beta-alanine. 124 to 127 is a binding site for ATP; sequence GEKD. (R)-pantoate is bound at residue Gln130. ATP contacts are provided by residues Val153 and 161 to 164; that span reads ASSR. Positions 254–490 are cytidylate kinase; that stretch reads FIMTRSPIVA…AKEIWPTPQG (237 aa).

In the N-terminal section; belongs to the pantothenate synthetase family. It in the C-terminal section; belongs to the cytidylate kinase family. Type 1 subfamily.

It is found in the cytoplasm. It carries out the reaction (R)-pantoate + beta-alanine + ATP = (R)-pantothenate + AMP + diphosphate + H(+). The enzyme catalyses CMP + ATP = CDP + ADP. The catalysed reaction is dCMP + ATP = dCDP + ADP. The protein operates within cofactor biosynthesis; (R)-pantothenate biosynthesis; (R)-pantothenate from (R)-pantoate and beta-alanine: step 1/1. Catalyzes the condensation of pantoate with beta-alanine in an ATP-dependent reaction via a pantoyl-adenylate intermediate. Functionally, catalyzes the transfer of a phosphate group from ATP to either CMP or dCMP to form CDP or dCDP and ADP, respectively. The sequence is that of Bifunctional pantoate ligase/cytidylate kinase from Synechococcus sp. (strain WH7803).